Reading from the N-terminus, the 177-residue chain is Small ribosomal subunit protein eS10z (177 aa).

The segment at 90–177 (TLKKSAKPGG…AAAPSGSGFP (88 aa)) is disordered. A compositionally biased stretch (basic and acidic residues) spans 108 to 140 (DRQRGPPRSDGDRPRFGDRDGYRGGPRGGDEKG). Low complexity predominate over residues 141 to 150 (GAPADFQPSF). Over residues 151–165 (QGGGGRPGFGRGAGG) the composition is skewed to gly residues. The segment covering 166 to 177 (YSAAAPSGSGFP) has biased composition (low complexity).

This sequence belongs to the eukaryotic ribosomal protein eS10 family.

The protein localises to the cytoplasm. The chain is Small ribosomal subunit protein eS10z (RPS10A) from Arabidopsis thaliana (Mouse-ear cress).